The chain runs to 211 residues: Urease accessory protein UreG (211 aa).

11 to 18 (GPVGSGKT) contacts GTP.

This sequence belongs to the SIMIBI class G3E GTPase family. UreG subfamily. Homodimer. UreD, UreF and UreG form a complex that acts as a GTP-hydrolysis-dependent molecular chaperone, activating the urease apoprotein by helping to assemble the nickel containing metallocenter of UreC. The UreE protein probably delivers the nickel.

The protein localises to the cytoplasm. Facilitates the functional incorporation of the urease nickel metallocenter. This process requires GTP hydrolysis, probably effectuated by UreG. The chain is Urease accessory protein UreG from Laribacter hongkongensis (strain HLHK9).